The chain runs to 156 residues: MADPARAKRLAKRISTIVASAIEYEIKDPRLAGVTITDAKVSGDLHDATLYYTVLGASLDEDPDYEGAAAALEKAKGVLRTKVGAGTGVRFTPTLAFVRDTVPDAAHRMEELLARARAADEDLARVREGAKHAGDPDPYRVGGAEDTDGDTDGDER.

A compositionally biased stretch (basic and acidic residues) spans 125 to 138 (RVREGAKHAGDPDP). Positions 125 to 156 (RVREGAKHAGDPDPYRVGGAEDTDGDTDGDER) are disordered. The span at 145 to 156 (EDTDGDTDGDER) shows a compositional bias: acidic residues.

It belongs to the RbfA family. Monomer. Binds 30S ribosomal subunits, but not 50S ribosomal subunits or 70S ribosomes.

It localises to the cytoplasm. One of several proteins that assist in the late maturation steps of the functional core of the 30S ribosomal subunit. Associates with free 30S ribosomal subunits (but not with 30S subunits that are part of 70S ribosomes or polysomes). Required for efficient processing of 16S rRNA. May interact with the 5'-terminal helix region of 16S rRNA. This Mycolicibacterium smegmatis (strain ATCC 700084 / mc(2)155) (Mycobacterium smegmatis) protein is Ribosome-binding factor A.